A 145-amino-acid chain; its full sequence is MVAKILVVHGPNLNLLGRREPSIYGHTTLEDINRNLVAKAQAASVVLDTFQSNAEHELIDRVQEAMNDGTGFIIINPAALTHTSIALRDALAATNLPFVEIHLSNIYAREHFRHTSYFSDIAVGVISGLGAAGYELALQFALARQ.

Catalysis depends on Tyr-24, which acts as the Proton acceptor. Substrate-binding residues include Asn-76, His-82, and Asp-89. His-102 functions as the Proton donor in the catalytic mechanism. Residues 103 to 104 (LS) and Arg-113 contribute to the substrate site.

This sequence belongs to the type-II 3-dehydroquinase family. As to quaternary structure, homododecamer.

The enzyme catalyses 3-dehydroquinate = 3-dehydroshikimate + H2O. It participates in metabolic intermediate biosynthesis; chorismate biosynthesis; chorismate from D-erythrose 4-phosphate and phosphoenolpyruvate: step 3/7. Catalyzes a trans-dehydration via an enolate intermediate. The protein is 3-dehydroquinate dehydratase of Nitrosomonas eutropha (strain DSM 101675 / C91 / Nm57).